The chain runs to 231 residues: Chromosome partition protein MukE (231 aa).

Residues 197–231 (RDGEAMPIEGGLSLDDSENDETSDNSAEGTGDEQP) are disordered.

It belongs to the MukE family. As to quaternary structure, interacts, and probably forms a ternary complex, with MukF and MukB. The complex formation is stimulated by calcium or magnesium.

It is found in the cytoplasm. The protein localises to the nucleoid. Its function is as follows. Involved in chromosome condensation, segregation and cell cycle progression. May participate in facilitating chromosome segregation by condensation DNA from both sides of a centrally located replisome during cell division. Probably acts via its interaction with MukB and MukF. The polypeptide is Chromosome partition protein MukE (Photorhabdus laumondii subsp. laumondii (strain DSM 15139 / CIP 105565 / TT01) (Photorhabdus luminescens subsp. laumondii)).